The chain runs to 32 residues: Cyclotide glopa B (32 aa).

The segment at residues 1–32 (GGSVPCIETCVWTGCFLVPGCSCKSDKKCYLN) is a cross-link (cyclopeptide (Gly-Asn)). Intrachain disulfides connect cysteine 6–cysteine 21, cysteine 10–cysteine 23, and cysteine 15–cysteine 29.

This is a cyclic peptide.

Functionally, probably participates in a plant defense mechanism. This Gloeospermum pauciflorum protein is Cyclotide glopa B.